The chain runs to 234 residues: Uridylate kinase (234 aa).

Residues 8–11 (KLSG), G51, and R55 contribute to the ATP site. Residues D68 and 129–136 (TSNPFFTT) contribute to the UMP site. ATP-binding residues include T156, Y162, and D165.

This sequence belongs to the UMP kinase family. As to quaternary structure, homohexamer.

Its subcellular location is the cytoplasm. The enzyme catalyses UMP + ATP = UDP + ADP. It participates in pyrimidine metabolism; CTP biosynthesis via de novo pathway; UDP from UMP (UMPK route): step 1/1. Its activity is regulated as follows. Inhibited by UTP. Functionally, catalyzes the reversible phosphorylation of UMP to UDP. The polypeptide is Uridylate kinase (Fervidobacterium nodosum (strain ATCC 35602 / DSM 5306 / Rt17-B1)).